A 446-amino-acid polypeptide reads, in one-letter code: Sphingomyelinase phosphodiesterase C (446 aa).

The first 26 residues, 1–26 (MKFRNNLTLYLIFIIVFTIYISLTIS), serve as a signal peptide directing secretion. N6 is a glycosylation site (N-linked (GlcNAc...) asparagine). Residues D39 and H41 each coordinate Zn(2+). Cysteines 56 and 78 form a disulfide. D107 contributes to the Zn(2+) binding site. 2 N-linked (GlcNAc...) asparagine glycosylation sites follow: N118 and N128. N148 contacts Zn(2+). 4 N-linked (GlcNAc...) asparagine glycosylation sites follow: N178, N217, N229, and N234. Positions 247, 287, and 289 each coordinate Zn(2+). 2 N-linked (GlcNAc...) asparagine glycosylation sites follow: N342 and N357. C429 and C442 are joined by a disulfide.

Belongs to the acid sphingomyelinase family. It depends on Zn(2+) as a cofactor.

It is found in the secreted. The chain is Sphingomyelinase phosphodiesterase C (sgmC) from Dictyostelium discoideum (Social amoeba).